Consider the following 311-residue polypeptide: Mediator of RNA polymerase II transcription subunit 27-A (311 aa).

It belongs to the Mediator complex subunit 27 family. Component of the Mediator complex.

It is found in the nucleus. Functionally, component of the Mediator complex, a coactivator involved in the regulated transcription of nearly all RNA polymerase II-dependent genes. Mediator functions as a bridge to convey information from gene-specific regulatory proteins to the basal RNA polymerase II transcription machinery. Mediator is recruited to promoters by direct interactions with regulatory proteins and serves as a scaffold for the assembly of a functional preinitiation complex with RNA polymerase II and the general transcription factors. The chain is Mediator of RNA polymerase II transcription subunit 27-A (med27-a) from Xenopus laevis (African clawed frog).